A 156-amino-acid chain; its full sequence is Protein Smg homolog (156 aa).

Belongs to the Smg family.

This chain is Protein Smg homolog, found in Halorhodospira halophila (strain DSM 244 / SL1) (Ectothiorhodospira halophila (strain DSM 244 / SL1)).